A 937-amino-acid chain; its full sequence is AP-2 complex subunit beta (937 aa).

N-acetylthreonine is present on threonine 2. Serine 4 carries the phosphoserine modification. At lysine 265 the chain carries N6-acetyllysine. Residues 593–617 form a disordered region; sequence LPIHHGSTDAGDSPVGTTTTTNLEQ. Positions 607–617 are enriched in polar residues; that stretch reads VGTTTTTNLEQ. Phosphotyrosine is present on residues tyrosine 737 and tyrosine 928.

It belongs to the adaptor complexes large subunit family. In terms of assembly, adaptor protein complex 2 (AP-2) is a heterotetramer composed of two large adaptins (alpha-type subunit AP2A1 or AP2A2 and beta-type subunit AP2B1), a medium adaptin (mu-type subunit AP2M1) and a small adaptin (sigma-type subunit AP2S1). Interacts with EPN1. Interacts with EPS15; clathrin competes with EPS15. Interacts with SNAP91; clathrin competes with SNAP91. Interacts with CLTC; clathrin competes with EPS15, SNAP91 and PIP5K1C. Interacts with LDLRAP1. Interacts with AMPH and BIN1. Interacts with ARF6 (GDP-bound). Interacts (dephosphorylated at Tyr-737) with ARRB1; phosphorylation of AP2B1 at Tyr-737 disrupts the interaction. Interacts with SLC2A8. Interacts with SCYL1 and SCYL2. Interacts with TGFBR1 and TGFBR2. Interacts with PIP5K1C; clathrin competes with PIP5K1C. Interacts with DENND1B. Interacts with FCHO1. Interacts with RFTN1. Interacts with KIAA1107. Together with AP2A1 or AP2A2 and AP2M1, it interacts with ADAM10; this interaction facilitates ADAM10 endocytosis from the plasma membrane during long-term potentiation in hippocampal neurons. In terms of tissue distribution, expressed in the brain (at protein level).

The protein resides in the cell membrane. It is found in the membrane. The protein localises to the coated pit. Its function is as follows. Component of the adaptor protein complex 2 (AP-2). Adaptor protein complexes function in protein transport via transport vesicles in different membrane traffic pathways. Adaptor protein complexes are vesicle coat components and appear to be involved in cargo selection and vesicle formation. AP-2 is involved in clathrin-dependent endocytosis in which cargo proteins are incorporated into vesicles surrounded by clathrin (clathrin-coated vesicles, CCVs) which are destined for fusion with the early endosome. The clathrin lattice serves as a mechanical scaffold but is itself unable to bind directly to membrane components. Clathrin-associated adaptor protein (AP) complexes which can bind directly to both the clathrin lattice and to the lipid and protein components of membranes are considered to be the major clathrin adaptors contributing the CCV formation. AP-2 also serves as a cargo receptor to selectively sort the membrane proteins involved in receptor-mediated endocytosis. AP-2 seems to play a role in the recycling of synaptic vesicle membranes from the presynaptic surface. AP-2 recognizes Y-X-X-[FILMV] (Y-X-X-Phi) and [ED]-X-X-X-L-[LI] endocytosis signal motifs within the cytosolic tails of transmembrane cargo molecules. AP-2 may also play a role in maintaining normal post-endocytic trafficking through the ARF6-regulated, non-clathrin pathway. During long-term potentiation in hippocampal neurons, AP-2 is responsible for the endocytosis of ADAM10. The AP-2 beta subunit acts via its C-terminal appendage domain as a scaffolding platform for endocytic accessory proteins; at least some clathrin-associated sorting proteins (CLASPs) are recognized by their [DE]-X(1,2)-F-X-X-[FL]-X-X-X-R motif. The AP-2 beta subunit binds to clathrin heavy chain, promoting clathrin lattice assembly; clathrin displaces at least some CLASPs from AP2B1 which probably then can be positioned for further coat assembly. This Mus musculus (Mouse) protein is AP-2 complex subunit beta (Ap2b1).